A 228-amino-acid polypeptide reads, in one-letter code: Translin (228 aa).

The segment at 86 to 90 (RFHEH) is DNA/RNA binding. The interval 177–198 (LDSGFRLLNLKNDSLRKRYDGL) is leucine-zipper. Lysine 187 is subject to N6-acetyllysine. A Phosphoserine modification is found at serine 190. Lysine 199 carries the post-translational modification N6-acetyllysine.

This sequence belongs to the translin family. In terms of assembly, ring-shaped heterooctamer of six TSN and two TSNAX subunits, DNA/RNA binding occurs inside the ring.

It localises to the cytoplasm. The protein resides in the nucleus. Functionally, DNA-binding protein that specifically recognizes consensus sequences at the breakpoint junctions in chromosomal translocations, mostly involving immunoglobulin (Ig)/T-cell receptor gene segments. Seems to recognize single-stranded DNA ends generated by staggered breaks occurring at recombination hot spots. Its function is as follows. Exhibits both single-stranded and double-stranded endoribonuclease activity. May act as an activator of RNA-induced silencing complex (RISC) by facilitating endonucleolytic cleavage of the siRNA passenger strand. In Pongo abelii (Sumatran orangutan), this protein is Translin (TSN).